The chain runs to 139 residues: Envelope glycoprotein N (139 aa).

Residues 1–100 (MACGKTESGD…CHSHFYGLSV (100 aa)) are Virion surface-facing. A helical transmembrane segment spans residues 101–121 (SSFASIWMMVNAIVFICAFGV). The Intravirion portion of the chain corresponds to 122-139 (FMRHWCYKAFTSDTAKGY).

It belongs to the herpesviridae glycoprotein N family. As to quaternary structure, interacts (via N-terminus) with gM (via N-terminus). The gM-gN heterodimer forms the gCII complex.

Its subcellular location is the virion membrane. The protein resides in the host membrane. The protein localises to the host Golgi apparatus. It is found in the host trans-Golgi network. Its function is as follows. Envelope glycoprotein necessary for proper maturation of gM and modulation of its membrane fusion activity. Also plays a critical role in virion morphogenesis. The sequence is that of Envelope glycoprotein N from Mus musculus (Mouse).